The sequence spans 307 residues: Ribulose bisphosphate carboxylase/oxygenase activase, chloroplastic (307 aa).

A chloroplast-targeting transit peptide spans 1–46 (MSIPDDKEAGTIDEFLQKEGVLDILQKLDHDLVGLKPVKDRVREIA). ATP is bound at residue 73–80 (GSPGTGKT).

Belongs to the CbxX/CfxQ family. As to quaternary structure, forms homooligomers. Forms heterohexameric rings with the plastid-encoded Rca subunit consisting of 3 of each nuclear- and plastidial-encoded subunits that alternate in the ring.

Its subcellular location is the plastid. The protein resides in the chloroplast. In terms of biological role, required for the expression of ribulose 1,5-bisphosphate carboxylase/oxygenase (RuBisCo). ATPase involved in the activation of red-type RuBisCo, which tends to form inactive complexes with its substrate ribulose 1,5-bisphosphate (RuBP). Catalyzes the release of RuBP from inhibited RuBisCo in an ATP-dependent manner. Activation of RuBisCO involves the ATP-dependent carboxylation of the epsilon-amino group of lysine leading to a carbamate structure. The nuclear-encoded subunit plays a more critical role in activase function than the plastidial-encoded subunit. The polypeptide is Ribulose bisphosphate carboxylase/oxygenase activase, chloroplastic (Cyanidioschyzon merolae (strain NIES-3377 / 10D) (Unicellular red alga)).